The following is a 755-amino-acid chain: MKNLNGRTHNACYHPYYHQSLHFAQQQQQQQQHHLQQQQQHMQQQQQQQQAPQQQLRHQQRQLPTQPAYQQSQSVAHNAFPLRSSSNNYGHVASSAYAASSGSHNSNNAAAMAAVCQMQNFFNQQQQQQQQLEFNNNCMPINYYQQQQQQHYPSESQSSASGWNPETPGQAQLALTATTCNTTAAATCNTTAAATTSTTATSAAAGSDNNHSDNFAMDASEIATFLANELFLQQLGNFETGQSVLTLTTPTLTPTTTRNIEDTLGHLLSDTQTDRVAGCAGFAVPKVLPNAIDVLGMGIPTGVSSLPLQQTFDLSLGQGSESEDSNASYNDTQMNEEQDTTDTSSAHTDSTSYQAGHIMAGSVNGGGVNNFSNVLAAVSSSRGSASVGSSNANTSNTPARRGGGRRPNRSTNMTPEEEQKRAVRRERNKQAAARCRKRRVDQTNELTEEVEQLEKRGESMRKEIEVLTNSKNQLEYLLATHRATCQKIRSDMLSVVTCNGLIAPAGLLSAGSSGSGASSHHNHNSNDSSNGTITGMDATLNSTGRSNSPLDLKPAANIDSLLMHIKDEPLDGAIDSGSSLDQDGPPPSKRITLPPMSTMPHVHLSTILTPTGASSGSLQTPITSTAPGGFGSAFPVTSNGSSINNINSIGNNMNSPTLNAHNKVPKERPNTLAFQRPLGQMHLTMANNKAGGPTQIQGVPIQTPSTGTFNFDSLMDGGTGLTPVSGPLVPNSSSTNKHPLELPTPTAEPSKLVSL.

Composition is skewed to low complexity over residues 23 to 66 (FAQQ…LPTQ) and 149 to 159 (QQHYPSESQSS). 4 disordered regions span residues 23 to 75 (FAQQ…SQSV), 149 to 168 (QQHY…PETP), 316 to 350 (LGQG…HTDS), and 383 to 440 (GSAS…KRRV). Over residues 316-333 (LGQGSESEDSNASYNDTQ) the composition is skewed to polar residues. Low complexity-rich tracts occupy residues 341 to 350 (TDTSSAHTDS) and 383 to 397 (GSAS…TSNT). A bZIP domain is found at 418 to 481 (EQKRAVRRER…NQLEYLLATH (64 aa)). The tract at residues 420–439 (KRAVRRERNKQAAARCRKRR) is basic motif. The tract at residues 446–453 (LTEEVEQL) is leucine-zipper. Low complexity predominate over residues 510–531 (AGSSGSGASSHHNHNSNDSSNG). Disordered regions lie at residues 510–552 (AGSS…PLDL) and 716–755 (DGGT…LVSL). The segment covering 539 to 549 (TLNSTGRSNSP) has biased composition (polar residues). S548 carries the phosphoserine modification.

The protein belongs to the bZIP family. Fos subfamily. In terms of assembly, homodimer. Heterodimer with Jra. The kay-Jra heterodimer binds more stably to the AP-1 site than either of the two proteins alone. In terms of tissue distribution, early expression in the embryo is mesodermal and some of this expression is localized to a region surrounding the cephalic furrow. Later in embryonic development expression is ectodermal, corresponding to muscle attachment sites. Also observed in part of the mid- and hindgut and in the anal pad.

It is found in the nucleus. Functionally, developmentally regulated transcription factor AP-1 binds and recognizes the enhancer DNA sequence: 5'-TGA[CG]TCA-3'. May play a role in the function or determination of a particular subset of cells in the developing embryo. It is able to carry out its function either independently of or in conjunction with Jra. The sequence is that of Transcription factor kayak, isoforms A/B/F (kay) from Drosophila melanogaster (Fruit fly).